The chain runs to 291 residues: MKFVIVTGMSGAGKSTAMKMMEDMGYFCIDNLPIQLLDKLIDLSNTFHSDVSKVAVGIDVRNGSGIDAIPQTLEQLRQKNFPYEILFLDAEDEVLVKRYKETRRNHPLAGSERINKGIVLEREKLQYLKDNADYIIDTSQLLTRELKIELEKIFVQNEDYKNLFITILSFGFKYGIPSDSDIVMDVRFLPNPYYVDGLRAKTGNDKEIQDYVMQFPEANEFIDKLDDMIKFLIPNYISEGKNQLVISIGCTGGKHRSVTLANELYKRLSGCNDYGLKIEHRDIGKDALRGK.

ATP is bound at residue 8-15 (GMSGAGKS). 59 to 62 (DVRN) provides a ligand contact to GTP.

It belongs to the RapZ-like family.

Functionally, displays ATPase and GTPase activities. This chain is Nucleotide-binding protein EUBREC_0697, found in Agathobacter rectalis (strain ATCC 33656 / DSM 3377 / JCM 17463 / KCTC 5835 / VPI 0990) (Eubacterium rectale).